The following is a 275-amino-acid chain: MSLVLAVYGKGGIGKSTTSANISAALALKGAKVLQIGCDPKHDSTFPITGKLQKTVIEALEEVDFHHEELTAEDVIETGFAGIDGLEAGGPPAGSGCGGYVVGESVTLLQELGLYDKYDVILFDVLGDVVCGGFSAPLNYADYAIIIATNDFDSIFAANRLCMAIQQKSVRYKVKLAGIVANRVDYTTGGGTNMLDQFAEKVGTRLLAKVPYHELIRKSRFAGKTLFAMEDTPGKDECLVPYNEIAETLMQENTPASIPEPIGDREIFEIVGGWQ.

ATP contacts are provided by residues 12-17 (GIGKST) and K41. Residue S16 participates in Mg(2+) binding. The [4Fe-4S] cluster site is built by C97 and C131. Position 182–183 (182–183 (NR)) interacts with ATP.

This sequence belongs to the NifH/BchL/ChlL family. Homodimer. Protochlorophyllide reductase is composed of three subunits; BchL, BchN and BchB. The cofactor is [4Fe-4S] cluster.

It catalyses the reaction chlorophyllide a + oxidized 2[4Fe-4S]-[ferredoxin] + 2 ADP + 2 phosphate = protochlorophyllide a + reduced 2[4Fe-4S]-[ferredoxin] + 2 ATP + 2 H2O. It participates in porphyrin-containing compound metabolism; bacteriochlorophyll biosynthesis (light-independent). In terms of biological role, component of the dark-operative protochlorophyllide reductase (DPOR) that uses Mg-ATP and reduced ferredoxin to reduce ring D of protochlorophyllide (Pchlide) to form chlorophyllide a (Chlide). This reaction is light-independent. The L component serves as a unique electron donor to the NB-component of the complex, and binds Mg-ATP. This chain is Light-independent protochlorophyllide reductase iron-sulfur ATP-binding protein, found in Chlorobium phaeovibrioides (strain DSM 265 / 1930) (Prosthecochloris vibrioformis (strain DSM 265)).